The following is a 286-amino-acid chain: ATP synthase gamma chain (286 aa).

The protein belongs to the ATPase gamma chain family. In terms of assembly, F-type ATPases have 2 components, CF(1) - the catalytic core - and CF(0) - the membrane proton channel. CF(1) has five subunits: alpha(3), beta(3), gamma(1), delta(1), epsilon(1). CF(0) has three main subunits: a, b and c.

It localises to the cell inner membrane. In terms of biological role, produces ATP from ADP in the presence of a proton gradient across the membrane. The gamma chain is believed to be important in regulating ATPase activity and the flow of protons through the CF(0) complex. The polypeptide is ATP synthase gamma chain (Teredinibacter turnerae (strain ATCC 39867 / T7901)).